A 1158-amino-acid chain; its full sequence is Rho1 guanine nucleotide exchange factor 2 (1158 aa).

Positions 42–141 are disordered; the sequence is RSSGSITHSP…SFSVSDVSNG (100 aa). Positions 45–63 are enriched in polar residues; that stretch reads GSITHSPTALSSTTSLNEN. Residues 68 to 81 show a composition bias toward low complexity; that stretch reads FRPASSLSFSPSSL. Over residues 97 to 108 the composition is skewed to polar residues; the sequence is KNNFYRRSSSTD. A compositionally biased stretch (low complexity) spans 132 to 141; the sequence is SFSVSDVSNG. Residues 447 to 634 form the DH domain; the sequence is KRQEIIFEVI…REFLTKLNYE (188 aa). Residues 670 to 805 form the PH domain; that stretch reads LIFKGVVKLK…QHIEKQQDII (136 aa). Phosphoserine occurs at positions 746 and 747. The 296-residue stretch at 825–1120 folds into the CNH domain; sequence GNKLLCAVAY…KLLTDGRGLI (296 aa).

The protein localises to the cytoplasm. Stimulates the exchange of Rho1 and Rho5 GDP-bound form into GTP-bound form. Controls septum formation, cell wall synthesis and localization of F-actin patches. In Schizosaccharomyces pombe (strain 972 / ATCC 24843) (Fission yeast), this protein is Rho1 guanine nucleotide exchange factor 2 (rgf2).